The primary structure comprises 719 residues: Polyphosphate kinase (719 aa).

ATP is bound at residue Asn47. Residues Arg377 and Arg407 each coordinate Mg(2+). Catalysis depends on His437, which acts as the Phosphohistidine intermediate. The ATP site is built by Tyr470, Arg566, and His594.

The protein belongs to the polyphosphate kinase 1 (PPK1) family. Requires Mg(2+) as cofactor. In terms of processing, an intermediate of this reaction is the autophosphorylated ppk in which a phosphate is covalently linked to a histidine residue through a N-P bond.

The catalysed reaction is [phosphate](n) + ATP = [phosphate](n+1) + ADP. Its function is as follows. Catalyzes the reversible transfer of the terminal phosphate of ATP to form a long-chain polyphosphate (polyP). The sequence is that of Polyphosphate kinase from Exiguobacterium sibiricum (strain DSM 17290 / CCUG 55495 / CIP 109462 / JCM 13490 / 255-15).